The primary structure comprises 100 residues: Aspartyl/glutamyl-tRNA(Asn/Gln) amidotransferase subunit C (100 aa).

It belongs to the GatC family. As to quaternary structure, heterotrimer of A, B and C subunits.

The enzyme catalyses L-glutamyl-tRNA(Gln) + L-glutamine + ATP + H2O = L-glutaminyl-tRNA(Gln) + L-glutamate + ADP + phosphate + H(+). It carries out the reaction L-aspartyl-tRNA(Asn) + L-glutamine + ATP + H2O = L-asparaginyl-tRNA(Asn) + L-glutamate + ADP + phosphate + 2 H(+). Functionally, allows the formation of correctly charged Asn-tRNA(Asn) or Gln-tRNA(Gln) through the transamidation of misacylated Asp-tRNA(Asn) or Glu-tRNA(Gln) in organisms which lack either or both of asparaginyl-tRNA or glutaminyl-tRNA synthetases. The reaction takes place in the presence of glutamine and ATP through an activated phospho-Asp-tRNA(Asn) or phospho-Glu-tRNA(Gln). This is Aspartyl/glutamyl-tRNA(Asn/Gln) amidotransferase subunit C from Staphylococcus epidermidis (strain ATCC 35984 / DSM 28319 / BCRC 17069 / CCUG 31568 / BM 3577 / RP62A).